A 454-amino-acid chain; its full sequence is UPF0210 protein EUBELI_01067 (454 aa).

Belongs to the UPF0210 family. As to quaternary structure, homodimer.

This Lachnospira eligens (strain ATCC 27750 / DSM 3376 / VPI C15-48 / C15-B4) (Eubacterium eligens) protein is UPF0210 protein EUBELI_01067.